A 199-amino-acid chain; its full sequence is Recombination protein RecR (199 aa).

The C4-type zinc-finger motif lies at 57–72 (CPICGNITEKEICDIC). Positions 80-176 (TTIMVVEQPK…KVTRLAAGLS (97 aa)) constitute a Toprim domain.

It belongs to the RecR family.

Its function is as follows. May play a role in DNA repair. It seems to be involved in an RecBC-independent recombinational process of DNA repair. It may act with RecF and RecO. This Lactobacillus acidophilus (strain ATCC 700396 / NCK56 / N2 / NCFM) protein is Recombination protein RecR.